The primary structure comprises 344 residues: Biotin synthase (344 aa).

The Radical SAM core domain maps to 40-267; sequence AQVQVSTLLS…KSMVRLSAGR (228 aa). Residues cysteine 55, cysteine 59, and cysteine 62 each contribute to the [4Fe-4S] cluster site. Residues cysteine 99, cysteine 130, cysteine 190, and arginine 262 each contribute to the [2Fe-2S] cluster site.

This sequence belongs to the radical SAM superfamily. Biotin synthase family. As to quaternary structure, homodimer. [4Fe-4S] cluster serves as cofactor. It depends on [2Fe-2S] cluster as a cofactor.

It catalyses the reaction (4R,5S)-dethiobiotin + (sulfur carrier)-SH + 2 reduced [2Fe-2S]-[ferredoxin] + 2 S-adenosyl-L-methionine = (sulfur carrier)-H + biotin + 2 5'-deoxyadenosine + 2 L-methionine + 2 oxidized [2Fe-2S]-[ferredoxin]. The protein operates within cofactor biosynthesis; biotin biosynthesis; biotin from 7,8-diaminononanoate: step 2/2. In terms of biological role, catalyzes the conversion of dethiobiotin (DTB) to biotin by the insertion of a sulfur atom into dethiobiotin via a radical-based mechanism. The protein is Biotin synthase of Xanthomonas euvesicatoria pv. vesicatoria (strain 85-10) (Xanthomonas campestris pv. vesicatoria).